A 147-amino-acid chain; its full sequence is Nucleoside diphosphate kinase (147 aa).

6 residues coordinate ATP: Lys9, Phe57, Arg85, Thr91, Arg102, and Asn112. His115 serves as the catalytic Pros-phosphohistidine intermediate.

This sequence belongs to the NDK family. In terms of assembly, homotetramer. Mg(2+) is required as a cofactor.

Its subcellular location is the cytoplasm. The enzyme catalyses a 2'-deoxyribonucleoside 5'-diphosphate + ATP = a 2'-deoxyribonucleoside 5'-triphosphate + ADP. The catalysed reaction is a ribonucleoside 5'-diphosphate + ATP = a ribonucleoside 5'-triphosphate + ADP. Major role in the synthesis of nucleoside triphosphates other than ATP. The ATP gamma phosphate is transferred to the NDP beta phosphate via a ping-pong mechanism, using a phosphorylated active-site intermediate. The protein is Nucleoside diphosphate kinase of Kosmotoga olearia (strain ATCC BAA-1733 / DSM 21960 / TBF 19.5.1).